The sequence spans 20 residues: Luminal-binding protein (20 aa).

This sequence belongs to the heat shock protein 70 family.

It is found in the endoplasmic reticulum lumen. Functionally, probably plays a role in facilitating the assembly of multimeric protein complexes inside the ER. The protein is Luminal-binding protein of Phaseolus vulgaris (Kidney bean).